Consider the following 253-residue polypeptide: 5'/3'-nucleotidase SurE (253 aa).

A divalent metal cation contacts are provided by D8, D9, S39, and N92.

The protein belongs to the SurE nucleotidase family. Requires a divalent metal cation as cofactor.

It localises to the cytoplasm. The enzyme catalyses a ribonucleoside 5'-phosphate + H2O = a ribonucleoside + phosphate. It carries out the reaction a ribonucleoside 3'-phosphate + H2O = a ribonucleoside + phosphate. The catalysed reaction is [phosphate](n) + H2O = [phosphate](n-1) + phosphate + H(+). Nucleotidase with a broad substrate specificity as it can dephosphorylate various ribo- and deoxyribonucleoside 5'-monophosphates and ribonucleoside 3'-monophosphates with highest affinity to 3'-AMP. Also hydrolyzes polyphosphate (exopolyphosphatase activity) with the preference for short-chain-length substrates (P20-25). Might be involved in the regulation of dNTP and NTP pools, and in the turnover of 3'-mononucleotides produced by numerous intracellular RNases (T1, T2, and F) during the degradation of various RNAs. This Serratia proteamaculans (strain 568) protein is 5'/3'-nucleotidase SurE.